We begin with the raw amino-acid sequence, 316 residues long: Small ribosomal subunit biogenesis GTPase RsgA (316 aa).

The 166-residue stretch at Asp-83–Phe-248 folds into the CP-type G domain. Residues Asn-131–Asp-134 and Gly-185–Thr-193 each bind GTP. Zn(2+) is bound by residues Cys-272, Cys-277, His-279, and Cys-285.

The protein belongs to the TRAFAC class YlqF/YawG GTPase family. RsgA subfamily. Monomer. Associates with 30S ribosomal subunit, binds 16S rRNA. The cofactor is Zn(2+).

Its subcellular location is the cytoplasm. Functionally, one of several proteins that assist in the late maturation steps of the functional core of the 30S ribosomal subunit. Helps release RbfA from mature subunits. May play a role in the assembly of ribosomal proteins into the subunit. Circularly permuted GTPase that catalyzes slow GTP hydrolysis, GTPase activity is stimulated by the 30S ribosomal subunit. This Paraburkholderia phytofirmans (strain DSM 17436 / LMG 22146 / PsJN) (Burkholderia phytofirmans) protein is Small ribosomal subunit biogenesis GTPase RsgA.